The chain runs to 647 residues: Epithelial sodium channel subunit beta (647 aa).

Residues 1 to 57 (MIHGKMKRLKRYFTRALHRIQKGPGYTYKELLVWFCDNTNTHGPKRIIKEGPKKRVM) are Cytoplasmic-facing. Residues 58-78 (WFILTLVFAGLVFWQWGVLIL) form a helical membrane-spanning segment. The Extracellular portion of the chain corresponds to 79–552 (TYLSYGVSVS…GGQFGFWMGG (474 aa)). Cystine bridges form between C104-C291, C215-C222, C268-C275, C381-C468, C406-C464, C410-C460, C419-C446, and C421-C435. Residues 553–573 (SVLCIIEFGEIIIDCMWITIL) traverse the membrane as a helical segment. Topologically, residues 574–647 (KFLAWSRNRR…AEPVSSDEEN (74 aa)) are cytoplasmic. A disordered region spans residues 586-647 (RKRPQYSDPP…AEPVSSDEEN (62 aa)).

This sequence belongs to the amiloride-sensitive sodium channel (TC 1.A.6) family. SCNN1B subfamily. In terms of assembly, component of the heterotrimeric epithelial sodium channel (ENaC) composed of an alpha/SCNN1A, a beta/SCNN1B and a gamma/SCNN1G subunit.

The protein localises to the apical cell membrane. Its subcellular location is the cytoplasmic vesicle membrane. The enzyme catalyses Na(+)(in) = Na(+)(out). With respect to regulation, originally identified and characterized by its inhibition by the diuretic drug amiloride. Its function is as follows. This is one of the three pore-forming subunits of the heterotrimeric epithelial sodium channel (ENaC), a critical regulator of sodium balance and fluid homeostasis. ENaC operates in epithelial tissues, where it mediates the electrodiffusion of sodium ions from extracellular fluid through the apical membrane of cells, with water following osmotically. In Xenopus laevis (African clawed frog), this protein is Epithelial sodium channel subunit beta (scnn1b-a).